The primary structure comprises 309 residues: MKYLITIVGPTAIGKTALSIALAQHFKCEIVSCDSRQFFKEMTIGTAVPSQEELNSAKHHFIQNKSIFENYTVGDYEKEALAKIEELFEANDFVILIGGSGLYVDAILKGFDEFPEIDPNVRAEVNTNYEKLGIEYLQEQLKNLDPEYYQKITLENPQTLQNPQRMMRFVEVCIGSQKPYSSFLNLKKNNRNFTPILIGLDADREIIYSRINQRVDIMMNEGLLKEAETLYPNKALNALQTVGYRELFSYFDGDFTLPFAIEEIKKNTRRFSKRQLTWFKRNENTKWFDYSTDRNEIIHYIVENLKSSI.

Residue 9–16 coordinates ATP; the sequence is GPTAIGKT. 11–16 lines the substrate pocket; it reads TAIGKT. 2 interaction with substrate tRNA regions span residues 34-37 and 164-168; these read DSRQ and QRMMR.

The protein belongs to the IPP transferase family. In terms of assembly, monomer. The cofactor is Mg(2+).

The enzyme catalyses adenosine(37) in tRNA + dimethylallyl diphosphate = N(6)-dimethylallyladenosine(37) in tRNA + diphosphate. Functionally, catalyzes the transfer of a dimethylallyl group onto the adenine at position 37 in tRNAs that read codons beginning with uridine, leading to the formation of N6-(dimethylallyl)adenosine (i(6)A). The chain is tRNA dimethylallyltransferase from Flavobacterium johnsoniae (strain ATCC 17061 / DSM 2064 / JCM 8514 / BCRC 14874 / CCUG 350202 / NBRC 14942 / NCIMB 11054 / UW101) (Cytophaga johnsonae).